The following is a 61-amino-acid chain: Photosystem II reaction center protein K (61 aa).

The propeptide occupies 1 to 24 (MLNIFSLICICLNSVLYSSSFFVA). Residues 40–60 (MPVIPVLFFLLAFVWQAAVSF) traverse the membrane as a helical segment.

This sequence belongs to the PsbK family. As to quaternary structure, PSII is composed of 1 copy each of membrane proteins PsbA, PsbB, PsbC, PsbD, PsbE, PsbF, PsbH, PsbI, PsbJ, PsbK, PsbL, PsbM, PsbT, PsbX, PsbY, PsbZ, Psb30/Ycf12, at least 3 peripheral proteins of the oxygen-evolving complex and a large number of cofactors. It forms dimeric complexes.

It localises to the plastid. The protein resides in the chloroplast thylakoid membrane. One of the components of the core complex of photosystem II (PSII). PSII is a light-driven water:plastoquinone oxidoreductase that uses light energy to abstract electrons from H(2)O, generating O(2) and a proton gradient subsequently used for ATP formation. It consists of a core antenna complex that captures photons, and an electron transfer chain that converts photonic excitation into a charge separation. The sequence is that of Photosystem II reaction center protein K from Morus indica (Mulberry).